The primary structure comprises 56 residues: MIDHRILEILVCPLTKDKLQYNKDTNELISQKAKLAFPIRDGIPIMLIDEARKLEP.

The protein belongs to the UPF0434 family.

The protein is UPF0434 protein Ecaj_0131 of Ehrlichia canis (strain Jake).